Reading from the N-terminus, the 156-residue chain is Small ribosomal subunit protein uS7 (156 aa).

The protein belongs to the universal ribosomal protein uS7 family. As to quaternary structure, part of the 30S ribosomal subunit. Contacts proteins S9 and S11.

Its function is as follows. One of the primary rRNA binding proteins, it binds directly to 16S rRNA where it nucleates assembly of the head domain of the 30S subunit. Is located at the subunit interface close to the decoding center, probably blocks exit of the E-site tRNA. This chain is Small ribosomal subunit protein uS7, found in Anoxybacillus flavithermus (strain DSM 21510 / WK1).